The sequence spans 126 residues: C-X-C motif chemokine 9 (126 aa).

A signal peptide spans 1-21 (MKSAVLFLLGIIFLEQCGVRG). Intrachain disulfides connect Cys30-Cys57 and Cys32-Cys73. N-linked (GlcNAc...) asparagine glycosylation occurs at Asn58. The disordered stretch occupies residues 91 to 126 (KISQKKKQKRGKKHQKNMKNRKPKTPQSRRRSRKTT). The span at 93–126 (SQKKKQKRGKKHQKNMKNRKPKTPQSRRRSRKTT) shows a compositional bias: basic residues.

It belongs to the intercrine alpha (chemokine CxC) family.

It is found in the secreted. May be a cytokine that affects the growth, movement, or activation state of cells that participate in immune and inflammatory response. This chain is C-X-C motif chemokine 9 (Cxcl9), found in Mus musculus (Mouse).